The following is a 182-amino-acid chain: Autophagy-related protein 31 (182 aa).

A disordered region spans residues 105–134; it reads LTSGNDTGGDAGKKSGDISDPAAGPDVPRE.

The protein localises to the cytoplasm. It localises to the cytoskeleton. The protein resides in the preautophagosomal structure. Functionally, plays a role in starvation-induced autophagy. Involved in mitophagy. Functions with ATG17 and ATG29 at the preautophagosomal structure (PAS) in order to form normal autophagosomes under starvation conditions. May be involved in microtubule function, such as chromosome segregation and karyogamy. The polypeptide is Autophagy-related protein 31 (CIS1) (Candida glabrata (strain ATCC 2001 / BCRC 20586 / JCM 3761 / NBRC 0622 / NRRL Y-65 / CBS 138) (Yeast)).